The following is a 356-amino-acid chain: Red-sensitive opsin-2 (356 aa).

At 1–48 (MAEWANAAFAARRRGDETTRDNAFSYTNSNNTRDPFEGPNYHIAPRWV) the chain is on the extracellular side. Asn-30 is a glycosylation site (N-linked (GlcNAc...) asparagine). The chain crosses the membrane as a helical span at residues 49–73 (YNVATVWMFFVVVASTFTNGLVLVA). Over 74-85 (TAKFKKLRHPLN) the chain is Cytoplasmic. Residues 86 to 111 (WILVNLAIADLGETLFASTISVINQV) form a helical membrane-spanning segment. Topologically, residues 112–125 (FGYFILGHPMCIFE) are extracellular. A disulfide bridge connects residues Cys-122 and Cys-199. A helical membrane pass occupies residues 126–145 (GYTVSVCGIAGLWSLTVISW). At 146–164 (ERWVVVCKPFGNVKFDGKW) the chain is on the cytoplasmic side. Residues 165–188 (ASAGIIFSWVWAAVWCAPPIFGWS) form a helical membrane-spanning segment. Residues 189–214 (RYWPHGLKTSCGPDVFGGNEDPGVQS) lie on the Extracellular side of the membrane. The helical transmembrane segment at 215–242 (YMLVLMITCCILPLAIIILCYIAVFLAI) threads the bilayer. The Cytoplasmic portion of the chain corresponds to 243 to 264 (HAVAQQQKDSESTQKAEKEVSR). A helical membrane pass occupies residues 265-288 (MVVVMILAFCLCWGPYTAFACFAA). The Extracellular portion of the chain corresponds to 289 to 296 (ANPGYAFH). The chain crosses the membrane as a helical span at residues 297–321 (PLAAAMPAYFAKSATIYNPIIYVFM). The residue at position 308 (Lys-308) is an N6-(retinylidene)lysine. Over 322–356 (NRQFRVCIMQLFGKKVDDGSEVSTSKTEVSSVAPA) the chain is Cytoplasmic.

This sequence belongs to the G-protein coupled receptor 1 family. Opsin subfamily. Post-translationally, phosphorylated on some or all of the serine and threonine residues present in the C-terminal region.

The protein localises to the membrane. Visual pigments are the light-absorbing molecules that mediate vision. They consist of an apoprotein, opsin, covalently linked to cis-retinal. The protein is Red-sensitive opsin-2 (opn1lw2) of Danio rerio (Zebrafish).